Here is a 239-residue protein sequence, read N- to C-terminus: MSLEYLPPVRRRIGQYNHLRIYKKILLLKSNFEKLNFFLGNLFPEELHDSKIHVYFEVRLGCRIPDCIIVFRHFGEKLLKTFHCYFFEFKTTFAKSNLFSIQKNRTQKIQYLQGLRQLRQATDYLQQFVIKNESLCKVNPVICFFRQHGLKLDFVKTFIAKELQLSSTFLCNLFTKYQNDTVKSILSISNPTNFRRACQKYSNLYRGRYATTPKLGNSKTSKRKRRNSKKQDFKKLVKN.

The tract at residues T212–N239 is disordered. Positions K229 to N239 are enriched in basic and acidic residues.

The protein belongs to the herpesviridae UL24 family.

It localises to the virion. The protein resides in the host cytoplasm. Its subcellular location is the host nucleus. The protein localises to the host nucleolus. It is found in the host Golgi apparatus. May participate in nuclear egress of viral particles. Plays a role in the dispersal of several host nucleolar proteins including NCL/nucleolin and NPM1. Since deletion of host NCL/nucleolin negatively impact on nuclear egress, UL24 supposedly acts on this process through its effect on host nucleoli. The chain is Protein UL24 homolog (U49) from Homo sapiens (Human).